Consider the following 550-residue polypeptide: MFCVQCEQTIRTPAGNGCSYAQGMCGKTAETSDLQDLLVAVLQGLSAWALQARELGIIDSQIDSFAPRAFFSTLTNVNFDSDRIVEYAKDAILLRHSLAVRCRLLDSTITVDHPLAELQLVADDIPSLLQQSQQFALNNDKADVGDDIHGLRMLCLYGLKGAAAYMEHAHVLGQSDEQIYAEYHAYMAWLGTQPRDVDTLLNNAMGIGKMNFNVMAILDQGETQAYGDPQPTSVNVRPVAGKAILISGHDLKDLHMLLEQTQGTGINIYTHGEMLPAHGYPELKRYPHLVGNYGSGWQNQQTEFAKFPGPILMTSNCIIDPNVGNYGDRIWTRSIVGWPGVNHLDGENFAPVIEQALGMAGFPYSELEHLITVGFGRQTLLNAADTVIDLVASKKLRHVFLVGGCDGSRTERSYFTDFARSVPQDCIIMTLACGKYRFNKLDFGTLEGLPRLLDVGQCNDAYAAIMLAVKLSEKLGCTVNDLPLSLVLSWFEQKAIVILLTLLSLGVKNIYTGPTAPGFLTDNLMAILYEKFGMQPITTVEQDMQAILGH.

Residues C3, C6, C18, and C25 each contribute to the [2Fe-2S] cluster site. Hybrid [4Fe-2O-2S] cluster is bound by residues H249, E273, C317, C405, C433, C458, E492, and K494. C405 carries the cysteine persulfide modification.

This sequence belongs to the HCP family. It depends on [2Fe-2S] cluster as a cofactor. Hybrid [4Fe-2O-2S] cluster is required as a cofactor.

The protein localises to the cytoplasm. It carries out the reaction A + NH4(+) + H2O = hydroxylamine + AH2 + H(+). Functionally, catalyzes the reduction of hydroxylamine to form NH(3) and H(2)O. The chain is Hydroxylamine reductase from Yersinia pseudotuberculosis serotype IB (strain PB1/+).